The chain runs to 335 residues: Putative peroxisomal biogenesis factor 19 (335 aa).

2 disordered regions span residues 14–70 (LETQ…LGND) and 104–124 (YNKD…PSEE). Low complexity-rich tracts occupy residues 22-55 (PTTT…PSTI) and 109-119 (NNNSDDSNNGG).

This sequence belongs to the peroxin-19 family.

It localises to the peroxisome. The chain is Putative peroxisomal biogenesis factor 19 (pex19) from Dictyostelium discoideum (Social amoeba).